Reading from the N-terminus, the 274-residue chain is Diaminopimelate epimerase (274 aa).

The substrate site is built by asparagine 11, glutamine 44, and asparagine 64. The active-site Proton donor is the cysteine 73. Residues 74 to 75 (GN), asparagine 157, asparagine 190, and 208 to 209 (ER) contribute to the substrate site. The Proton acceptor role is filled by cysteine 217. 218 to 219 (GS) lines the substrate pocket.

Belongs to the diaminopimelate epimerase family. As to quaternary structure, homodimer.

The protein resides in the cytoplasm. It carries out the reaction (2S,6S)-2,6-diaminopimelate = meso-2,6-diaminopimelate. It participates in amino-acid biosynthesis; L-lysine biosynthesis via DAP pathway; DL-2,6-diaminopimelate from LL-2,6-diaminopimelate: step 1/1. Its function is as follows. Catalyzes the stereoinversion of LL-2,6-diaminopimelate (L,L-DAP) to meso-diaminopimelate (meso-DAP), a precursor of L-lysine and an essential component of the bacterial peptidoglycan. The chain is Diaminopimelate epimerase from Yersinia enterocolitica serotype O:8 / biotype 1B (strain NCTC 13174 / 8081).